The following is a 379-amino-acid chain: Gap junction alpha-1 protein (379 aa).

Residues 2–23 (GDWSALGRLLDKVQAYSTAGGK) are Cytoplasmic-facing. The helical transmembrane segment at 24 to 44 (VWLSVLFIFRILLLGTAVESA) threads the bilayer. Residues 45–76 (WGDEQSAFVCNTQQPGCENVCYDKSFPISHVR) lie on the Extracellular side of the membrane. Disulfide bonds link cysteine 54–cysteine 192 and cysteine 187–cysteine 198. A helical transmembrane segment spans residues 77 to 97 (FWVLQIIFVSTPTLLYLAHVF). Residues 98–163 (YLMRKEEKLN…TYIISILFKS (66 aa)) are Cytoplasmic-facing. The helical transmembrane segment at 164–184 (VFEVGFIIIQWYMYGFSLSAI) threads the bilayer. Over 185–207 (YTCKRDPCPHQVDCFLSRPTEKT) the chain is Extracellular. A helical transmembrane segment spans residues 208–228 (IFIWFMLIVSIVSLALNIIEL). The Cytoplasmic segment spans residues 229-379 (FYVTYKSIKD…SRPRPDDLEI (151 aa)). Positions 322-379 (STISNTHAQPFDFSDEHQNTKKMAPGHEMQPLTILDQRPSSRASSHASSRPRPDDLEI) are disordered. A compositionally biased stretch (low complexity) spans 359–371 (RPSSRASSHASSR).

The protein belongs to the connexin family. Alpha-type (group II) subfamily. As to quaternary structure, a connexon is composed of a hexamer of connexins. Interacts with TMEM65. As to expression, expressed in most tissues. Highest levels found in eye and brain.

The protein localises to the cell membrane. Its subcellular location is the cell junction. It is found in the gap junction. Functionally, one gap junction consists of a cluster of closely packed pairs of transmembrane channels, the connexons, through which materials of low MW diffuse from one cell to a neighboring cell. Plays an essential role in gap junction communication in the ventricles. The chain is Gap junction alpha-1 protein (gja1) from Xenopus laevis (African clawed frog).